The following is an 80-amino-acid chain: Cell division protein ZapB (80 aa).

Residues 3–80 (FEVLEQLESK…ALLGKMDEVE (78 aa)) are a coiled coil.

Belongs to the ZapB family. In terms of assembly, homodimer. The ends of the coiled-coil dimer bind to each other, forming polymers. Interacts with FtsZ.

The protein resides in the cytoplasm. Non-essential, abundant cell division factor that is required for proper Z-ring formation. It is recruited early to the divisome by direct interaction with FtsZ, stimulating Z-ring assembly and thereby promoting cell division earlier in the cell cycle. Its recruitment to the Z-ring requires functional FtsA or ZipA. The polypeptide is Cell division protein ZapB (Vibrio parahaemolyticus serotype O3:K6 (strain RIMD 2210633)).